Consider the following 150-residue polypeptide: Large ribosomal subunit protein bL9 (150 aa).

The protein belongs to the bacterial ribosomal protein bL9 family.

Binds to the 23S rRNA. The chain is Large ribosomal subunit protein bL9 from Burkholderia multivorans (strain ATCC 17616 / 249).